We begin with the raw amino-acid sequence, 405 residues long: Metallophosphoesterase 1 (405 aa).

A helical membrane pass occupies residues 31-51 (IFGSILLVFFFCEFLVYYLVI). A divalent metal cation-binding residues include Asp78, Asp120, Asn158, His261, His315, and His317. The chain crosses the membrane as a helical span at residues 369–389 (IIYIYCTASVLLTGYVLACLW).

This sequence belongs to the metallophosphoesterase superfamily. MPPE1 family. It depends on Mn(2+) as a cofactor.

It localises to the endoplasmic reticulum-Golgi intermediate compartment membrane. In terms of biological role, metallophosphoesterase that catalyzes the removal of a side-chain ethanolamine-phosphate (EtNP) from the second mannose of the GPI-anchor protein intermediate. Participates in the glycan remodeling steps of GPI-anchor maturation to allow an efficient transport of GPI-anchor proteins from the endoplasmic reticulum to the Golgi. In Xenopus laevis (African clawed frog), this protein is Metallophosphoesterase 1.